The primary structure comprises 279 residues: Early nodulin-like protein 18 (279 aa).

A signal peptide spans M1–A24. One can recognise a Phytocyanin domain in the interval T25–A133. A disulfide bond links C82 and C121. N-linked (GlcNAc...) asparagine glycosylation is present at N83. The segment at R138–A256 is disordered. Positions A140–A168 are enriched in pro residues. Residues P169–P185 are compositionally biased toward low complexity. Pro residues predominate over residues S186–A199. Composition is skewed to low complexity over residues A212–A226 and T234–A256. The N-linked (GlcNAc...) asparagine glycan is linked to N238. S251 carries the GPI-anchor amidated serine lipid modification. Residues G252 to I279 constitute a propeptide, removed in mature form.

This sequence belongs to the early nodulin-like (ENODL) family. In terms of tissue distribution, specifically expressed in reproductive tissues. Mainly observed in developing seeds and in mature leaves.

The protein localises to the cell membrane. Its function is as follows. May act as a carbohydrate transporter. Promotes tolerance to salt stress in a redox-dependent manner. This Oryza sativa subsp. japonica (Rice) protein is Early nodulin-like protein 18.